We begin with the raw amino-acid sequence, 132 residues long: Fatty acid-binding protein, brain (132 aa).

Position 2 is an N-acetylvaline (V2). 127–129 (RCY) is a binding site for a fatty acid.

It belongs to the calycin superfamily. Fatty-acid binding protein (FABP) family. As to expression, expressed in brain and other neural tissues.

The protein localises to the cytoplasm. B-FABP could be involved in the transport of a so far unknown hydrophobic ligand with potential morphogenic activity during CNS development. It is required for the establishment of the radial glial fiber system in developing brain, a system that is necessary for the migration of immature neurons to establish cortical layers. This is Fatty acid-binding protein, brain (Fabp7) from Mus musculus (Mouse).